The chain runs to 713 residues: UvrABC system protein B (713 aa).

Residues 35–421 (RRIRAGEKDV…GDGFVEQIIR (387 aa)) form the Helicase ATP-binding domain. 48–55 (GATGTGKS) serves as a coordination point for ATP. The Beta-hairpin signature appears at 101-124 (YYDYYQPEAYVPQSDTYIEKDSSI). The 167-residue stretch at 438 to 604 (QIDDLVHEIR…PLRKKINDIV (167 aa)) folds into the Helicase C-terminal domain. The interval 624–663 (QAKDGKGAKAPVPSLGGKAAAKGAKSAKGKAKETVPTDRP) is disordered. A compositionally biased stretch (low complexity) spans 639–649 (GGKAAAKGAKS). The span at 653–663 (KAKETVPTDRP) shows a compositional bias: basic and acidic residues. The region spanning 668–703 (AEEIEELTNRMRAAAADLQFEIAARLRDEVSEMKKE) is the UVR domain.

This sequence belongs to the UvrB family. As to quaternary structure, forms a heterotetramer with UvrA during the search for lesions. Interacts with UvrC in an incision complex.

The protein localises to the cytoplasm. The UvrABC repair system catalyzes the recognition and processing of DNA lesions. A damage recognition complex composed of 2 UvrA and 2 UvrB subunits scans DNA for abnormalities. Upon binding of the UvrA(2)B(2) complex to a putative damaged site, the DNA wraps around one UvrB monomer. DNA wrap is dependent on ATP binding by UvrB and probably causes local melting of the DNA helix, facilitating insertion of UvrB beta-hairpin between the DNA strands. Then UvrB probes one DNA strand for the presence of a lesion. If a lesion is found the UvrA subunits dissociate and the UvrB-DNA preincision complex is formed. This complex is subsequently bound by UvrC and the second UvrB is released. If no lesion is found, the DNA wraps around the other UvrB subunit that will check the other stand for damage. This chain is UvrABC system protein B, found in Streptomyces avermitilis (strain ATCC 31267 / DSM 46492 / JCM 5070 / NBRC 14893 / NCIMB 12804 / NRRL 8165 / MA-4680).